The sequence spans 156 residues: Cyclic pyranopterin monophosphate synthase (156 aa).

Substrate contacts are provided by residues 75 to 77 and 111 to 112; these read LCH and ME. D126 is a catalytic residue.

Belongs to the MoaC family. As to quaternary structure, homohexamer; trimer of dimers.

The catalysed reaction is (8S)-3',8-cyclo-7,8-dihydroguanosine 5'-triphosphate = cyclic pyranopterin phosphate + diphosphate. The protein operates within cofactor biosynthesis; molybdopterin biosynthesis. Its function is as follows. Catalyzes the conversion of (8S)-3',8-cyclo-7,8-dihydroguanosine 5'-triphosphate to cyclic pyranopterin monophosphate (cPMP). The polypeptide is Cyclic pyranopterin monophosphate synthase (Corynebacterium glutamicum (strain R)).